Here is a 241-residue protein sequence, read N- to C-terminus: Tetraspanin-1 (241 aa).

Residues 1 to 11 (MQCFSFIKTMM) are Cytoplasmic-facing. Residues 12–32 (ILFNLLIFLCGAALLAVGIWV) form a helical membrane-spanning segment. At 33–52 (SIDGASFLKIFGPLSSSAMQ) the chain is on the extracellular side. A helical transmembrane segment spans residues 53 to 73 (FVNVGYFLIAAGVVVFALGFL). The Cytoplasmic portion of the chain corresponds to 74–88 (GCYGAKTESKCALVT). A helical membrane pass occupies residues 89–109 (FFFILLLIFIAEVAAAVVALV). The Extracellular portion of the chain corresponds to 110-211 (YTTMAEHFLT…NQLLYDIRTN (102 aa)). Asparagine 141, asparagine 154, asparagine 178, and asparagine 184 each carry an N-linked (GlcNAc...) asparagine glycan. Residues 212–232 (AVTVGGVAAGIGGLELAAMIV) traverse the membrane as a helical segment. Residues 233-241 (SMYLYCNLQ) are Cytoplasmic-facing.

This sequence belongs to the tetraspanin (TM4SF) family. As to quaternary structure, interacts with SLC19A2. Interacts with NTRK1/TRKA.

It is found in the cell membrane. Its subcellular location is the lysosome membrane. Functionally, structural component of specialized membrane microdomains known as tetraspanin-enriched microdomains (TERMs), which act as platforms for receptor clustering and signaling. Participates thereby in diverse biological functions such as cell signal transduction, adhesion, migration and protein trafficking. Regulates neuronal differentiation in response to NGF by facilitating NGF-mediated activation of NTRK1/TRKA receptor tyrosine kinase and subsequent downstream signaling pathways. Plays a role in the inhibition of TNFalpha-induced apoptosis. Mechanistically, inhibits the NF-kappa-B signaling pathway by blocking phosphorylation of CHUK. Also promotes the stability of the thiamine transporter 1/SLC19A2 in intestinal epithelial cells leading to an increase of thiamine uptake process. In Homo sapiens (Human), this protein is Tetraspanin-1 (TSPAN1).